Consider the following 281-residue polypeptide: Trypsin zeta (281 aa).

Residues 1–23 (MSSSSWLGCLLAVLLSALALSQG) form the signal peptide. A propeptide spans 24–39 (LPLLEDLDENSFPDGR) (activation peptide). In terms of domain architecture, Peptidase S1 spans 40-279 (IVGGYVTDIA…LRPWIDAVRA (240 aa)). A disulfide bridge links Cys73 with Cys89. Catalysis depends on charge relay system residues His88 and Asp135. 2 cysteine pairs are disulfide-bonded: Cys199-Cys219 and Cys231-Cys255. The active-site Charge relay system is Ser235.

The protein belongs to the peptidase S1 family.

It localises to the secreted. The protein localises to the extracellular space. The enzyme catalyses Preferential cleavage: Arg-|-Xaa, Lys-|-Xaa.. This chain is Trypsin zeta (zetaTry), found in Drosophila erecta (Fruit fly).